The primary structure comprises 431 residues: Tol-Pal system protein TolB (431 aa).

A signal peptide spans 1–24; it reads MMKFLTRMLSAFAVLFFAISTAQA. A disordered region spans residues 318–340; that stretch reads QVYRMSSSGGAASPVGGRGSAQI. Residues 323–332 show a composition bias toward low complexity; it reads SSSGGAASPV.

This sequence belongs to the TolB family. The Tol-Pal system is composed of five core proteins: the inner membrane proteins TolA, TolQ and TolR, the periplasmic protein TolB and the outer membrane protein Pal. They form a network linking the inner and outer membranes and the peptidoglycan layer.

It is found in the periplasm. Its function is as follows. Part of the Tol-Pal system, which plays a role in outer membrane invagination during cell division and is important for maintaining outer membrane integrity. This Mannheimia succiniciproducens (strain KCTC 0769BP / MBEL55E) protein is Tol-Pal system protein TolB.